Consider the following 353-residue polypeptide: Serine/threonine-protein kinase SRK2G (353 aa).

The Protein kinase domain maps to 4-260 (YDVVKDLGAG…LKEIKNHPWY (257 aa)). Residues 10 to 18 (LGAGNFGVA) and Lys-33 contribute to the ATP site. The Proton acceptor role is filled by Asp-123. Residues 299 to 353 (RNPAPSTSAVKSSGSGADEEEEEDVEAEVEEEEDDEDEYEKHVKEAQSCQESDKA) are disordered. Positions 302–313 (APSTSAVKSSGS) are enriched in polar residues. The span at 315 to 336 (ADEEEEEDVEAEVEEEEDDEDE) shows a compositional bias: acidic residues. Positions 337 to 353 (YEKHVKEAQSCQESDKA) are enriched in basic and acidic residues.

This sequence belongs to the protein kinase superfamily. Ser/Thr protein kinase family. In terms of tissue distribution, expressed in seedlings.

Its subcellular location is the nucleus. The enzyme catalyses L-seryl-[protein] + ATP = O-phospho-L-seryl-[protein] + ADP + H(+). It carries out the reaction L-threonyl-[protein] + ATP = O-phospho-L-threonyl-[protein] + ADP + H(+). The sequence is that of Serine/threonine-protein kinase SRK2G (SRK2G) from Arabidopsis thaliana (Mouse-ear cress).